The sequence spans 298 residues: 4-diphosphocytidyl-2-C-methyl-D-erythritol kinase (298 aa).

The active site involves Lys-11. 94–104 (PMGGGLGGGSS) serves as a coordination point for ATP. Asp-136 is a catalytic residue.

It belongs to the GHMP kinase family. IspE subfamily.

It carries out the reaction 4-CDP-2-C-methyl-D-erythritol + ATP = 4-CDP-2-C-methyl-D-erythritol 2-phosphate + ADP + H(+). It functions in the pathway isoprenoid biosynthesis; isopentenyl diphosphate biosynthesis via DXP pathway; isopentenyl diphosphate from 1-deoxy-D-xylulose 5-phosphate: step 3/6. Functionally, catalyzes the phosphorylation of the position 2 hydroxy group of 4-diphosphocytidyl-2C-methyl-D-erythritol. This is 4-diphosphocytidyl-2-C-methyl-D-erythritol kinase from Chromohalobacter salexigens (strain ATCC BAA-138 / DSM 3043 / CIP 106854 / NCIMB 13768 / 1H11).